Reading from the N-terminus, the 201-residue chain is Acyl-homoserine-lactone synthase (201 aa).

Belongs to the autoinducer synthase family.

The catalysed reaction is a fatty acyl-[ACP] + S-adenosyl-L-methionine = an N-acyl-L-homoserine lactone + S-methyl-5'-thioadenosine + holo-[ACP] + H(+). Functionally, required for the synthesis of PAI consisting of 3-oxo-N-(tetrahydro-2-oxo-3-furanyl)-dodecanamide also known as N-(3-oxododecanoyl)homoserine lactone, an autoinducer molecule which binds to LasR and thus acts in elastase biosynthesis regulation. In Pseudomonas aeruginosa (strain ATCC 15692 / DSM 22644 / CIP 104116 / JCM 14847 / LMG 12228 / 1C / PRS 101 / PAO1), this protein is Acyl-homoserine-lactone synthase (lasI).